The primary structure comprises 358 residues: Secreted protein RBT4 (358 aa).

A signal peptide spans 1–19 (MKFSQVATTAAIFAGLTTA). Composition is skewed to low complexity over residues 48–63 (VTGG…QSAA), 153–174 (TTEV…VATP), and 189–200 (AATTASGSSSGS). Disordered regions lie at residues 48–98 (VTGG…DGGN) and 144–203 (GFPS…SNDF). The SCP domain occupies 216–332 (LDAHNKKRAR…NWGLYVVCSY (117 aa)).

It belongs to the CRISP family.

The protein localises to the secreted. Functionally, secreted protein that acts as a virulence factor during infections such as in posttraumatic corneal infections. Acts as an important antigen in patients with systemic candidiasis and plays a role in the protection against phagocyte attack. The polypeptide is Secreted protein RBT4 (RBT4) (Candida albicans (strain SC5314 / ATCC MYA-2876) (Yeast)).